Reading from the N-terminus, the 586-residue chain is Acyl-coenzyme A synthetase ACSM3, mitochondrial (586 aa).

The transit peptide at 1–27 (MLARVTRKMLRHAKCFQRLAIFGSVRA) directs the protein to the mitochondrion. Lys73 and Lys106 each carry N6-succinyllysine. The residue at position 157 (Lys157) is an N6-acetyllysine. ATP is bound by residues 235–243 (TSGTSGYPK), 374–379 (EGYGQT), Asp461, Arg476, and Lys572.

The protein belongs to the ATP-dependent AMP-binding enzyme family. Requires Mg(2+) as cofactor. The cofactor is Mn(2+).

The protein localises to the mitochondrion. Its subcellular location is the mitochondrion matrix. It carries out the reaction a medium-chain fatty acid + ATP + CoA = a medium-chain fatty acyl-CoA + AMP + diphosphate. The enzyme catalyses propanoate + ATP + CoA = propanoyl-CoA + AMP + diphosphate. The catalysed reaction is butanoate + ATP + CoA = butanoyl-CoA + AMP + diphosphate. It catalyses the reaction 2-methylpropanoate + ATP + CoA = 2-methylpropanoyl-CoA + AMP + diphosphate. It carries out the reaction 2-methylbutanoate + ATP + CoA = 2-methylbutanoyl-CoA + AMP + diphosphate. The enzyme catalyses octanoate + ATP + CoA = octanoyl-CoA + AMP + diphosphate. Its function is as follows. Catalyzes the activation of fatty acids by CoA to produce an acyl-CoA, the first step in fatty acid metabolism. Capable of activating medium-chain fatty acids with a preference for isobutyrate among fatty acids with 2-6 carbon atoms. This is Acyl-coenzyme A synthetase ACSM3, mitochondrial (ACSM3) from Homo sapiens (Human).